The primary structure comprises 428 residues: Ribulose bisphosphate carboxylase (428 aa).

The active-site Proton acceptor is Lys-151. A substrate-binding site is contributed by Lys-153. Residues Lys-177, Asp-179, and Glu-180 each contribute to the Mg(2+) site. Lys-177 is subject to N6-carboxylysine. His-270 acts as the Proton acceptor in catalysis. Substrate-binding positions include Arg-271, His-303, 354–356 (SGG), and 376–379 (QFGG).

Belongs to the RuBisCO large chain family. Type III subfamily. Homodimer or homodecamer. In contrast to form I RuBisCO, the form III RuBisCO is composed solely of large subunits. Mg(2+) serves as cofactor.

The enzyme catalyses 2 (2R)-3-phosphoglycerate + 2 H(+) = D-ribulose 1,5-bisphosphate + CO2 + H2O. It catalyses the reaction D-ribulose 1,5-bisphosphate + O2 = 2-phosphoglycolate + (2R)-3-phosphoglycerate + 2 H(+). Its function is as follows. Catalyzes the addition of molecular CO(2) and H(2)O to ribulose 1,5-bisphosphate (RuBP), generating two molecules of 3-phosphoglycerate (3-PGA). Functions in an archaeal AMP degradation pathway, together with AMP phosphorylase and R15P isomerase. This Methanosarcina mazei (strain ATCC BAA-159 / DSM 3647 / Goe1 / Go1 / JCM 11833 / OCM 88) (Methanosarcina frisia) protein is Ribulose bisphosphate carboxylase.